The primary structure comprises 151 residues: Transmembrane protein 239 (151 aa).

The next 3 helical transmembrane spans lie at 61-81, 85-105, and 116-138; these read LWGL…HALF, SYLL…LLPA, and ALLF…GLLT.

The protein localises to the membrane. The sequence is that of Transmembrane protein 239 (Tmem239) from Mus musculus (Mouse).